A 1031-amino-acid chain; its full sequence is Exportin-T (1031 aa).

Belongs to the exportin family.

It is found in the nucleus. Its subcellular location is the cytoplasm. Functionally, tRNA nucleus export receptor which facilitates tRNA translocation across the nuclear pore complex. Involved in pre-tRNA splicing, probably by affecting the interaction of pre-tRNA with splicing endonuclease. The sequence is that of Exportin-T (los1) from Emericella nidulans (strain FGSC A4 / ATCC 38163 / CBS 112.46 / NRRL 194 / M139) (Aspergillus nidulans).